The sequence spans 347 residues: Very-long-chain 3-oxoacyl-CoA reductase (347 aa).

A helical membrane pass occupies residues 20 to 40 (LLWVVFGLGVLKCTTLSLRFL). NADP(+) contacts are provided by Asp120, Asn147, Tyr223, Lys227, Val256, and Ser258. Tyr223 acts as the Proton donor in catalysis. Lys227 (lowers pKa of active site Tyr) is an active-site residue.

Belongs to the short-chain dehydrogenases/reductases (SDR) family. As to quaternary structure, interacts with the fatty acid elongation system components ELO3 and TSC13.

It localises to the endoplasmic reticulum membrane. The enzyme catalyses a very-long-chain (3R)-3-hydroxyacyl-CoA + NADP(+) = a very-long-chain 3-oxoacyl-CoA + NADPH + H(+). It carries out the reaction 3-oxooctadecanoyl-CoA + NADPH + H(+) = (3R)-hydroxyoctadecanoyl-CoA + NADP(+). The catalysed reaction is 3-oxoeicosanoyl-CoA + NADPH + H(+) = (3R)-hydroxyeicosanoyl-CoA + NADP(+). It catalyses the reaction 3-oxodocosanoyl-CoA + NADPH + H(+) = (3R)-hydroxydocosanoyl-CoA + NADP(+). The enzyme catalyses 3-oxotetracosanoyl-CoA + NADPH + H(+) = (3R)-hydroxytetracosanoyl-CoA + NADP(+). It carries out the reaction 3-oxohexacosanoyl-CoA + NADPH + H(+) = (3R)-hydroxyhexacosanoyl-CoA + NADP(+). Its pathway is lipid metabolism; fatty acid biosynthesis. In terms of biological role, component of the microsomal membrane bound fatty acid elongation system, which produces the 26-carbon very long-chain fatty acids (VLCFA) from palmitate. Catalyzes the reduction of the 3-ketoacyl-CoA intermediate that is formed in each cycle of fatty acid elongation. VLCFAs serve as precursors for ceramide and sphingolipids. The polypeptide is Very-long-chain 3-oxoacyl-CoA reductase (IFA38) (Saccharomyces cerevisiae (strain ATCC 204508 / S288c) (Baker's yeast)).